The primary structure comprises 434 residues: ATP-dependent protease ATPase subunit HslU (434 aa).

ATP contacts are provided by residues isoleucine 18, 60–65 (GVGKTE), aspartate 247, glutamate 312, and arginine 384.

The protein belongs to the ClpX chaperone family. HslU subfamily. A double ring-shaped homohexamer of HslV is capped on each side by a ring-shaped HslU homohexamer. The assembly of the HslU/HslV complex is dependent on binding of ATP.

The protein resides in the cytoplasm. ATPase subunit of a proteasome-like degradation complex; this subunit has chaperone activity. The binding of ATP and its subsequent hydrolysis by HslU are essential for unfolding of protein substrates subsequently hydrolyzed by HslV. HslU recognizes the N-terminal part of its protein substrates and unfolds these before they are guided to HslV for hydrolysis. The polypeptide is ATP-dependent protease ATPase subunit HslU (Brucella anthropi (strain ATCC 49188 / DSM 6882 / CCUG 24695 / JCM 21032 / LMG 3331 / NBRC 15819 / NCTC 12168 / Alc 37) (Ochrobactrum anthropi)).